A 110-amino-acid polypeptide reads, in one-letter code: Keratin, type II cytoskeletal 8 (110 aa).

The tract at residues 1-12 (MSTSGPRAFSSR) is head. Residues 1-110 (MSTSGPRAFS…LDIEIATYRK (110 aa)) enclose the IF rod domain. Phosphoserine occurs at positions 2, 4, 10, and 11. Arginine 12 carries the omega-N-methylarginine modification. The segment at 13 to 25 (FASFIDKVRWSLL) is coil 1A. The linker 1 stretch occupies residues 26 to 39 (QQQKSNMDNMFESY). A Glycyl lysine isopeptide (Lys-Gly) (interchain with G-Cter in SUMO2) cross-link involves residue lysine 29. The interval 40–79 (INNLRDVDEAYMNKVELESRLEGLTDEINFLRQIHEEEIR) is coil 1B. Lysine 53 carries the post-translational modification N6-acetyllysine. Phosphoserine is present on residues serine 80 and serine 85. The segment at 80 to 86 (SLDMDSI) is linker 12. The interval 87-110 (IAEVRHGDDLRRLALDIEIATYRK) is coil 2. The segment at 88-99 (AEVRHGDDLRRL) is necessary for interaction with PNN. Lysine 110 is covalently cross-linked (Glycyl lysine isopeptide (Lys-Gly) (interchain with G-Cter in SUMO2)).

This sequence belongs to the intermediate filament family. As to quaternary structure, heterotetramer of two type I and two type II keratins. Forms a heterodimer with KRT18. Associates with KRT20. Interacts with PNN. When associated with KRT19, interacts with DMD. Interacts with TCHP. Interacts with APEX1. Interacts with GPER1. Interacts with EPPK1. Interacts with PKP1 and PKP2. Post-translationally, O-glycosylated. O-GlcNAcylation at multiple sites increases solubility, and decreases stability by inducing proteasomal degradation. O-glycosylated (O-GlcNAcylated), in a cell cycle-dependent manner.

It is found in the cytoplasm. Its subcellular location is the nucleus. The protein localises to the nucleoplasm. The protein resides in the nucleus matrix. Its function is as follows. Together with KRT19, helps to link the contractile apparatus to dystrophin at the costameres of striated muscle. This Mesocricetus auratus (Golden hamster) protein is Keratin, type II cytoskeletal 8.